The following is a 100-amino-acid chain: Large ribosomal subunit protein uL23 (100 aa).

Belongs to the universal ribosomal protein uL23 family. As to quaternary structure, part of the 50S ribosomal subunit. Contacts protein L29, and trigger factor when it is bound to the ribosome.

In terms of biological role, one of the early assembly proteins it binds 23S rRNA. One of the proteins that surrounds the polypeptide exit tunnel on the outside of the ribosome. Forms the main docking site for trigger factor binding to the ribosome. This Kosmotoga olearia (strain ATCC BAA-1733 / DSM 21960 / TBF 19.5.1) protein is Large ribosomal subunit protein uL23.